We begin with the raw amino-acid sequence, 582 residues long: Transcription factor PCF5 (582 aa).

2 disordered regions span residues 30 to 78 (AAGK…QHDH) and 123 to 195 (SPMG…GGGG). The span at 51 to 64 (GGDGGGVGGGGSGG) shows a compositional bias: gly residues. A TCP domain is found at 213-271 (RKDRHSKVCTARGPRDRRVRLSAHTAIQFYDVQDRLGYDRPSKAVDWLIKNAKDAIDKL). Disordered stretches follow at residues 283–306 (GAGA…ENSD), 402–423 (MFHH…TTQQ), and 548–582 (RLPA…ASHH).

In terms of assembly, forms homodimers and heterodimers with PCF2.

The protein localises to the nucleus. Transcription activator. Binds the promoter core sequence 5'-GGNCC-3'. In Oryza sativa subsp. indica (Rice), this protein is Transcription factor PCF5 (PCF5).